The primary structure comprises 399 residues: 4-hydroxy-3-methylbut-2-enyl diphosphate reductase (399 aa).

Residue cysteine 66 coordinates [4Fe-4S] cluster. Residue histidine 96 coordinates (2E)-4-hydroxy-3-methylbut-2-enyl diphosphate. Histidine 96 lines the dimethylallyl diphosphate pocket. Position 96 (histidine 96) interacts with isopentenyl diphosphate. Cysteine 157 is a [4Fe-4S] cluster binding site. Histidine 185 serves as a coordination point for (2E)-4-hydroxy-3-methylbut-2-enyl diphosphate. Histidine 185 is a binding site for dimethylallyl diphosphate. Histidine 185 is an isopentenyl diphosphate binding site. The Proton donor role is filled by glutamate 187. Threonine 250 is a (2E)-4-hydroxy-3-methylbut-2-enyl diphosphate binding site. A [4Fe-4S] cluster-binding site is contributed by cysteine 288. (2E)-4-hydroxy-3-methylbut-2-enyl diphosphate contacts are provided by serine 317, serine 318, asparagine 319, and serine 379. The dimethylallyl diphosphate site is built by serine 317, serine 318, asparagine 319, and serine 379. Residues serine 317, serine 318, asparagine 319, and serine 379 each contribute to the isopentenyl diphosphate site.

This sequence belongs to the IspH family. Requires [4Fe-4S] cluster as cofactor.

It carries out the reaction isopentenyl diphosphate + 2 oxidized [2Fe-2S]-[ferredoxin] + H2O = (2E)-4-hydroxy-3-methylbut-2-enyl diphosphate + 2 reduced [2Fe-2S]-[ferredoxin] + 2 H(+). The catalysed reaction is dimethylallyl diphosphate + 2 oxidized [2Fe-2S]-[ferredoxin] + H2O = (2E)-4-hydroxy-3-methylbut-2-enyl diphosphate + 2 reduced [2Fe-2S]-[ferredoxin] + 2 H(+). Its pathway is isoprenoid biosynthesis; dimethylallyl diphosphate biosynthesis; dimethylallyl diphosphate from (2E)-4-hydroxy-3-methylbutenyl diphosphate: step 1/1. The protein operates within isoprenoid biosynthesis; isopentenyl diphosphate biosynthesis via DXP pathway; isopentenyl diphosphate from 1-deoxy-D-xylulose 5-phosphate: step 6/6. In terms of biological role, catalyzes the conversion of 1-hydroxy-2-methyl-2-(E)-butenyl 4-diphosphate (HMBPP) into a mixture of isopentenyl diphosphate (IPP) and dimethylallyl diphosphate (DMAPP). Acts in the terminal step of the DOXP/MEP pathway for isoprenoid precursor biosynthesis. This is 4-hydroxy-3-methylbut-2-enyl diphosphate reductase from Synechococcus sp. (strain WH7803).